We begin with the raw amino-acid sequence, 269 residues long: Hydroxymethylpyrimidine/phosphomethylpyrimidine kinase (269 aa).

4-amino-5-hydroxymethyl-2-methylpyrimidine is bound at residue Q45.

The protein belongs to the ThiD family.

The catalysed reaction is 4-amino-5-hydroxymethyl-2-methylpyrimidine + ATP = 4-amino-2-methyl-5-(phosphooxymethyl)pyrimidine + ADP + H(+). It carries out the reaction 4-amino-2-methyl-5-(phosphooxymethyl)pyrimidine + ATP = 4-amino-2-methyl-5-(diphosphooxymethyl)pyrimidine + ADP. It participates in cofactor biosynthesis; thiamine diphosphate biosynthesis; 4-amino-2-methyl-5-diphosphomethylpyrimidine from 5-amino-1-(5-phospho-D-ribosyl)imidazole: step 2/3. It functions in the pathway cofactor biosynthesis; thiamine diphosphate biosynthesis; 4-amino-2-methyl-5-diphosphomethylpyrimidine from 5-amino-1-(5-phospho-D-ribosyl)imidazole: step 3/3. In terms of biological role, catalyzes the phosphorylation of hydroxymethylpyrimidine phosphate (HMP-P) to HMP-PP, and of HMP to HMP-P. The sequence is that of Hydroxymethylpyrimidine/phosphomethylpyrimidine kinase (thiD) from Helicobacter pylori (strain J99 / ATCC 700824) (Campylobacter pylori J99).